An 822-amino-acid chain; its full sequence is Probable phosphoketolase (822 aa).

It belongs to the XFP family. It depends on thiamine diphosphate as a cofactor.

The polypeptide is Probable phosphoketolase (Lactococcus lactis subsp. lactis (strain IL1403) (Streptococcus lactis)).